A 514-amino-acid polypeptide reads, in one-letter code: MTAVPTSERAPIAARLAPVLDWLRAHVPAGADLTSDTRKLKTGDVFVAYVLGNVRQRGDGRPHIPQAIEAGVSAVLAEAHGYVVPADAPARILPVDGLSELAGPLAAQWYAVPGPDALRVIGVTGTNGKTSCSQWIAQALSRQGERCAVVGTLGTGFVDALVATGFTTPDAIQLQHSLADLHRAGARAVAMEVSSHGLEQGRADGTRFDIALFTNLTQDHLDYHGTMAEYELAKARLFGWPGLRAAVINRDDAAGGRLLAGLRAGIEAVEYGIDGEAAAQRGAGHWLRATNVRAHRTGTTFDVDGSFGRATVHSPMVGLFNVSNQLGVLGVLLMAGVPWQDALARLEKLQPVSGRMERFGGEDGPLVVVDYAHTPDALEQTLRALAPITGARGGKLWAVFGCGGDRDPGKRPQMGAIAERLAQHVVLTSDNPRSEDPQLILDMIADGMEDPRLAIQIEDRAAAILHAVRHADVHDVIVVAGKGHESTQEIAGRKRPFSDQEHVRLALAARGVNA.

T37 serves as a coordination point for UDP-N-acetyl-alpha-D-muramoyl-L-alanyl-D-glutamate. 125–131 (GTNGKTS) contributes to the ATP binding site. Residues 167-168 (TT), S194, Q200, and R202 each bind UDP-N-acetyl-alpha-D-muramoyl-L-alanyl-D-glutamate. Residue K234 is modified to N6-carboxylysine. Meso-2,6-diaminopimelate-binding positions include R406, 430 to 433 (DNPR), G481, and E485. The short motif at 430–433 (DNPR) is the Meso-diaminopimelate recognition motif element.

This sequence belongs to the MurCDEF family. MurE subfamily. Requires Mg(2+) as cofactor. Carboxylation is probably crucial for Mg(2+) binding and, consequently, for the gamma-phosphate positioning of ATP.

It is found in the cytoplasm. It catalyses the reaction UDP-N-acetyl-alpha-D-muramoyl-L-alanyl-D-glutamate + meso-2,6-diaminopimelate + ATP = UDP-N-acetyl-alpha-D-muramoyl-L-alanyl-gamma-D-glutamyl-meso-2,6-diaminopimelate + ADP + phosphate + H(+). It participates in cell wall biogenesis; peptidoglycan biosynthesis. Functionally, catalyzes the addition of meso-diaminopimelic acid to the nucleotide precursor UDP-N-acetylmuramoyl-L-alanyl-D-glutamate (UMAG) in the biosynthesis of bacterial cell-wall peptidoglycan. The protein is UDP-N-acetylmuramoyl-L-alanyl-D-glutamate--2,6-diaminopimelate ligase of Ralstonia nicotianae (strain ATCC BAA-1114 / GMI1000) (Ralstonia solanacearum).